Here is a 116-residue protein sequence, read N- to C-terminus: Proline-rich protein 9 (116 aa).

The protein is Proline-rich protein 9 (PRR9) of Homo sapiens (Human).